The primary structure comprises 217 residues: MLO-like protein (217 aa).

Transmembrane regions (helical) follow at residues 35-55, 59-79, and 119-139; these read FKVVVGISPILWFFAVLFLLS, GWVAYLWLPFIPLIIILVVGT, and LVLFLIHFCLFQNAFQLAFFI.

Belongs to the MLO family.

It localises to the membrane. Its function is as follows. May be involved in modulation of pathogen defense and leaf cell death. The chain is MLO-like protein from Linum usitatissimum (Flax).